The primary structure comprises 508 residues: Glycerol kinase (508 aa).

T17 is an ADP binding site. 3 residues coordinate ATP: T17, T18, and S19. T17 serves as a coordination point for sn-glycerol 3-phosphate. R21 contributes to the ADP binding site. Residues R87, E88, Y139, and D256 each contribute to the sn-glycerol 3-phosphate site. Glycerol-binding residues include R87, E88, Y139, D256, and Q257. ADP-binding residues include T278 and G322. ATP is bound by residues T278, G322, Q326, and A423. A423 and N427 together coordinate ADP.

It belongs to the FGGY kinase family.

The catalysed reaction is glycerol + ATP = sn-glycerol 3-phosphate + ADP + H(+). It participates in polyol metabolism; glycerol degradation via glycerol kinase pathway; sn-glycerol 3-phosphate from glycerol: step 1/1. Inhibited by fructose 1,6-bisphosphate (FBP). In terms of biological role, key enzyme in the regulation of glycerol uptake and metabolism. Catalyzes the phosphorylation of glycerol to yield sn-glycerol 3-phosphate. The polypeptide is Glycerol kinase (Corynebacterium efficiens (strain DSM 44549 / YS-314 / AJ 12310 / JCM 11189 / NBRC 100395)).